Reading from the N-terminus, the 503-residue chain is Probable DNA ligase (503 aa).

Residue E210 participates in ATP binding. K212 serves as the catalytic N6-AMP-lysine intermediate. The ATP site is built by R217, R232, E261, F296, R367, and K373.

This sequence belongs to the ATP-dependent DNA ligase family. The cofactor is Mg(2+).

It carries out the reaction ATP + (deoxyribonucleotide)n-3'-hydroxyl + 5'-phospho-(deoxyribonucleotide)m = (deoxyribonucleotide)n+m + AMP + diphosphate.. DNA ligase that seals nicks in double-stranded DNA during DNA replication, DNA recombination and DNA repair. This is Probable DNA ligase from Rhodococcus jostii (strain RHA1).